The sequence spans 336 residues: tRNA N6-adenosine threonylcarbamoyltransferase (336 aa).

The Fe cation site is built by H114 and H118. Residues 136-140 (LVSGG), D169, G182, D186, and N275 contribute to the substrate site. D302 serves as a coordination point for Fe cation.

This sequence belongs to the KAE1 / TsaD family. It depends on Fe(2+) as a cofactor.

The protein localises to the cytoplasm. The enzyme catalyses L-threonylcarbamoyladenylate + adenosine(37) in tRNA = N(6)-L-threonylcarbamoyladenosine(37) in tRNA + AMP + H(+). Functionally, required for the formation of a threonylcarbamoyl group on adenosine at position 37 (t(6)A37) in tRNAs that read codons beginning with adenine. Is involved in the transfer of the threonylcarbamoyl moiety of threonylcarbamoyl-AMP (TC-AMP) to the N6 group of A37, together with TsaE and TsaB. TsaD likely plays a direct catalytic role in this reaction. The chain is tRNA N6-adenosine threonylcarbamoyltransferase from Streptococcus agalactiae serotype III (strain NEM316).